A 78-amino-acid chain; its full sequence is Small ribosomal subunit protein bS16c (78 aa).

The protein belongs to the bacterial ribosomal protein bS16 family.

The protein resides in the plastid. The protein localises to the chloroplast. This is Small ribosomal subunit protein bS16c from Panax ginseng (Korean ginseng).